A 267-amino-acid polypeptide reads, in one-letter code: Hydroxyethylthiazole kinase (267 aa).

A substrate-binding site is contributed by Met44. Residues Lys120 and Thr166 each coordinate ATP. Position 193 (Gly193) interacts with substrate.

This sequence belongs to the Thz kinase family. Mg(2+) serves as cofactor.

It catalyses the reaction 5-(2-hydroxyethyl)-4-methylthiazole + ATP = 4-methyl-5-(2-phosphooxyethyl)-thiazole + ADP + H(+). The protein operates within cofactor biosynthesis; thiamine diphosphate biosynthesis; 4-methyl-5-(2-phosphoethyl)-thiazole from 5-(2-hydroxyethyl)-4-methylthiazole: step 1/1. Catalyzes the phosphorylation of the hydroxyl group of 4-methyl-5-beta-hydroxyethylthiazole (THZ). The sequence is that of Hydroxyethylthiazole kinase from Desulfitobacterium hafniense (strain DSM 10664 / DCB-2).